We begin with the raw amino-acid sequence, 280 residues long: Four and a half LIM domains protein 1 (280 aa).

Ser2 carries the post-translational modification N-acetylserine. N6-acetyllysine is present on Lys4. The C4-type zinc-finger motif lies at 7–31; that stretch reads CHYCRDPLQGKKYVQKDGRHCCLKC. LIM zinc-binding domains lie at 40–92, 101–153, 162–212, and 221–276; these read CVDC…CNKC, CKGC…CVTC, CVKC…CVDC, and CAGC…CPDC. Lys86 is covalently cross-linked (Glycyl lysine isopeptide (Lys-Gly) (interchain with G-Cter in SUMO2)).

Isoform 1 seems to be most abundant in each tissue and isoform 2 much less abundant. Isoform 1 is highly expressed in skeletal muscle and lung, and to a lesser extent in heart, brain and kidney. Isoform 2 was found in brain, lung kidney and genital organs.

The protein localises to the cytoplasm. The protein resides in the nucleus. Functionally, may have an involvement in muscle development or hypertrophy. Isoform 2 binds to RBP-J and plays a negative regulatory role in the RBP-J-mediated transcription in mammalian systems. The sequence is that of Four and a half LIM domains protein 1 (Fhl1) from Mus musculus (Mouse).